Consider the following 123-residue polypeptide: Small ribosomal subunit protein uS13 (123 aa).

Residues 95 to 123 (GLPVRGQSSKTNARTRKGPRRSVMSRKKK) are disordered. Basic residues predominate over residues 107–123 (ARTRKGPRRSVMSRKKK).

This sequence belongs to the universal ribosomal protein uS13 family. In terms of assembly, part of the 30S ribosomal subunit. Forms a loose heterodimer with protein S19. Forms two bridges to the 50S subunit in the 70S ribosome.

Its function is as follows. Located at the top of the head of the 30S subunit, it contacts several helices of the 16S rRNA. In the 70S ribosome it contacts the 23S rRNA (bridge B1a) and protein L5 of the 50S subunit (bridge B1b), connecting the 2 subunits; these bridges are implicated in subunit movement. Contacts the tRNAs in the A and P-sites. This is Small ribosomal subunit protein uS13 from Maridesulfovibrio salexigens (strain ATCC 14822 / DSM 2638 / NCIMB 8403 / VKM B-1763) (Desulfovibrio salexigens).